Here is a 268-residue protein sequence, read N- to C-terminus: tRNA pseudouridine synthase A (268 aa).

Residue D52 is the Nucleophile of the active site. Y110 is a binding site for substrate.

It belongs to the tRNA pseudouridine synthase TruA family. In terms of assembly, homodimer.

The catalysed reaction is uridine(38/39/40) in tRNA = pseudouridine(38/39/40) in tRNA. In terms of biological role, formation of pseudouridine at positions 38, 39 and 40 in the anticodon stem and loop of transfer RNAs. The polypeptide is tRNA pseudouridine synthase A (Prochlorococcus marinus (strain AS9601)).